The primary structure comprises 210 residues: Prolactin (210 aa).

The N-terminal stretch at 1–23 (MTQGSRLYFAVAVLMCGFVSING) is a signal peptide. 2 disulfides stabilise this stretch: Cys-69–Cys-183 and Cys-200–Cys-210.

The protein belongs to the somatotropin/prolactin family. As to expression, pituitary gland.

Its subcellular location is the secreted. This is Prolactin (prl1) from Carassius auratus (Goldfish).